The following is a 164-amino-acid chain: Sorting nexin-3 (164 aa).

The interval 1–26 (MSGKREFKSFGSTEETMFSQHHKIPS) is disordered. Over residues 10-26 (FGSTEETMFSQHHKIPS) the composition is skewed to polar residues. The region spanning 40–163 (IEVRNPKTHV…IRFIEDDKFV (124 aa)) is the PX domain. A 1,2-diacyl-sn-glycero-3-phospho-(1D-myo-inositol-3-phosphate) is bound by residues R83, S85, K114, R120, and R129.

The protein belongs to the sorting nexin family.

The protein localises to the cytoplasm. The protein resides in the golgi apparatus membrane. It localises to the prevacuolar compartment membrane. Required for retention of late Golgi membrane proteins. Component of the retrieval machinery that functions by direct interaction with the cytosolic tails of certain TGN membrane proteins during the sorting/budding process at the prevacuolar compartment. Binds phosphatidylinositol 3-phosphate (PtdIns(P3)). This Candida glabrata (strain ATCC 2001 / BCRC 20586 / JCM 3761 / NBRC 0622 / NRRL Y-65 / CBS 138) (Yeast) protein is Sorting nexin-3 (SNX3).